The following is a 118-amino-acid chain: Pterin-4-alpha-carbinolamine dehydratase (118 aa).

It belongs to the pterin-4-alpha-carbinolamine dehydratase family.

It carries out the reaction (4aS,6R)-4a-hydroxy-L-erythro-5,6,7,8-tetrahydrobiopterin = (6R)-L-erythro-6,7-dihydrobiopterin + H2O. In terms of biological role, involved in tetrahydrobiopterin biosynthesis. Seems to both prevent the formation of 7-pterins and accelerate the formation of quinonoid-BH2. May also have a positive regulatory role in the expression of phhA. This Pseudomonas syringae pv. tomato (strain ATCC BAA-871 / DC3000) protein is Pterin-4-alpha-carbinolamine dehydratase (phhB).